The primary structure comprises 256 residues: Non-specific lipid transfer protein GPI-anchored 23 (256 aa).

The signal sequence occupies residues 1 to 21; sequence MKPSFVLLSIVLLLSSSLSDA. The N-linked (GlcNAc...) asparagine glycan is linked to N41. Disulfide bonds link C45–C88, C55–C72, C73–C113, and C86–C121. The interval 125-230 is disordered; it reads TPAASTPVSP…SPSPSPSPSI (106 aa). Residues 138-230 are compositionally biased toward low complexity; it reads SPTTSPSSAK…SPSPSPSPSI (93 aa). S225 carries GPI-anchor amidated serine lipidation. Residues 226–256 constitute a propeptide, removed in mature form; the sequence is PSPSISSSGILLVSKLFIAVVMVSSFLYILA.

The protein belongs to the plant LTP family. Confined to the anthers of the inflorescence.

It is found in the cell membrane. Its function is as follows. Probable lipid transfer protein. The protein is Non-specific lipid transfer protein GPI-anchored 23 of Arabidopsis thaliana (Mouse-ear cress).